The primary structure comprises 89 residues: Small ribosomal subunit protein uS15 (89 aa).

The protein belongs to the universal ribosomal protein uS15 family. In terms of assembly, part of the 30S ribosomal subunit. Forms a bridge to the 50S subunit in the 70S ribosome, contacting the 23S rRNA.

Its function is as follows. One of the primary rRNA binding proteins, it binds directly to 16S rRNA where it helps nucleate assembly of the platform of the 30S subunit by binding and bridging several RNA helices of the 16S rRNA. Functionally, forms an intersubunit bridge (bridge B4) with the 23S rRNA of the 50S subunit in the ribosome. The polypeptide is Small ribosomal subunit protein uS15 (Alcanivorax borkumensis (strain ATCC 700651 / DSM 11573 / NCIMB 13689 / SK2)).